The primary structure comprises 292 residues: Ribosomal protein L11 methyltransferase (292 aa).

4 residues coordinate S-adenosyl-L-methionine: Thr-143, Gly-164, Asp-186, and Asn-227.

The protein belongs to the methyltransferase superfamily. PrmA family.

Its subcellular location is the cytoplasm. The catalysed reaction is L-lysyl-[protein] + 3 S-adenosyl-L-methionine = N(6),N(6),N(6)-trimethyl-L-lysyl-[protein] + 3 S-adenosyl-L-homocysteine + 3 H(+). In terms of biological role, methylates ribosomal protein L11. This is Ribosomal protein L11 methyltransferase from Hahella chejuensis (strain KCTC 2396).